A 51-amino-acid chain; its full sequence is Epididymal sperm protein E (51 aa).

The segment at 8-39 is a zinc-finger region; the sequence is CVRCRRKTPSFNSKTVTFRNKRRAIRSHCAYC.

In terms of tissue distribution, sperm.

The protein localises to the nucleus. The protein is Epididymal sperm protein E of Sepia officinalis (Common cuttlefish).